The following is a 130-amino-acid chain: UPF0251 protein MmarC6_0272 (130 aa).

It belongs to the UPF0251 family.

This Methanococcus maripaludis (strain C6 / ATCC BAA-1332) protein is UPF0251 protein MmarC6_0272.